A 364-amino-acid polypeptide reads, in one-letter code: Autophagy-related protein 5 (364 aa).

Residues 1 to 13 (MASPNPYSYSPQL) are compositionally biased toward polar residues. Residues 1–103 (MASPNPYSYS…SLPPKPKPSS (103 aa)) are disordered. Residues 28–42 (SSPSFRSTPFRSSRG) show a composition bias toward low complexity. Positions 43-53 (TGAGTGIGLGL) are enriched in gly residues. Over residues 72–82 (RSGDGSHDDLP) the composition is skewed to basic and acidic residues. Residue K202 forms a Glycyl lysine isopeptide (Lys-Gly) (interchain with G-Cter in ATG12) linkage. The tract at residues 262–306 (PSSPSPPSSDQQQPQRPGGSSSSGSYRVMQTLVPPRGPNNRTPQT) is disordered. A compositionally biased stretch (low complexity) spans 269-286 (SSDQQQPQRPGGSSSSGS).

Belongs to the ATG5 family. Conjugated with atg12. Conjugated to atg12; which is essential for autophagy.

It localises to the preautophagosomal structure membrane. Its function is as follows. Involved in cytoplasm to vacuole transport (Cvt) and autophagic vesicle formation. Autophagy is essential for maintenance of amino acid levels and protein synthesis under nitrogen starvation. Required for selective autophagic degradation of the nucleus (nucleophagy). Also required for mitophagy, which eliminates defective or superfluous mitochondria in order to fulfill cellular energy requirements and prevent excess ROS production. Conjugation with atg12, through a ubiquitin-like conjugating system involving apg-5/atg7 as an E1-like activating enzyme and atg10 as an E2-like conjugating enzyme, is essential for its function. The atg12-apg-4/atg5 conjugate acts as an E3-like enzyme which is required for lipidation of apg-6/atg8 and apg-6/atg8 association to the vesicle membranes. This is Autophagy-related protein 5 (apg-4) from Neurospora crassa (strain ATCC 24698 / 74-OR23-1A / CBS 708.71 / DSM 1257 / FGSC 987).